The chain runs to 1343 residues: DNA-directed RNA polymerase subunit beta (1343 aa).

It belongs to the RNA polymerase beta chain family. The RNAP catalytic core consists of 2 alpha, 1 beta, 1 beta' and 1 omega subunit. When a sigma factor is associated with the core the holoenzyme is formed, which can initiate transcription.

It carries out the reaction RNA(n) + a ribonucleoside 5'-triphosphate = RNA(n+1) + diphosphate. Functionally, DNA-dependent RNA polymerase catalyzes the transcription of DNA into RNA using the four ribonucleoside triphosphates as substrates. The sequence is that of DNA-directed RNA polymerase subunit beta from Shewanella woodyi (strain ATCC 51908 / MS32).